A 717-amino-acid chain; its full sequence is Serologically defined colon cancer antigen 8 homolog (717 aa).

Phosphoserine is present on residues S4 and S28. The tract at residues 84-115 (QTNKENETSPPRRRKLSPSRPSECDDGSMPTM) is disordered. Coiled-coil stretches lie at residues 129–168 (IHHL…KSQR), 221–278 (DANK…LAAS), 352–590 (EEAN…SEQY), and 622–712 (RSQI…LPSM). Residues 216-717 (TASTGDANKW…QLPSMPQSDC (502 aa)) form a sufficient for homodimerization region.

Homodimer. Interacts with OFD1; the interaction is direct. Interacts with FAM161A. Interacts with RABEP2, ERC1 and CEP131. In terms of tissue distribution, expressed in liver, kidney, spleen, brain, heart and muscle. Expressed in photoreceptor cells of the retina.

The protein localises to the cytoplasm. The protein resides in the cytoskeleton. It localises to the microtubule organizing center. It is found in the centrosome. Its subcellular location is the centriole. The protein localises to the cilium basal body. The protein resides in the cell junction. Functionally, plays a role in the establishment of cell polarity and epithelial lumen formation. Also plays an essential role in ciliogenesis and subsequent Hedgehog signaling pathway that requires the presence of intact primary cilia for pathway activation. Mechanistically, interacts with and mediates RABEP2 centrosomal localization which is critical for ciliogenesis. The polypeptide is Serologically defined colon cancer antigen 8 homolog (Sdccag8) (Mus musculus (Mouse)).